The primary structure comprises 580 residues: MNHKDWDLVNRRLVAKMLSELEYEQVFHAESQGDDRYCINLPGAQWRFIAERGIWGWLWIDAQTLRCADEPVLAQTLLMQLKQVLSMSDATVAEHMQDLYATLLGDLQLLKARRGLSASDLINLNADRLQCLLSGHPKFVFNKGRRGWGKEALERYAPEYANTFRLHWLAVKREHMIWRCDNEMDIHQLLTAAMDPQEFARFSQVWQENGLDHNWLPLPVHPWQWQEKIATDFIADFGEGRMVSLGEFGDQWLAQQSLRTLTNASRRGGLDIKLPLTIYNTSCYRGIPGRYIAAGPLASRWLQQVFATDATLVQSGAVILGEPAAGYVSHEGYAALARAPYRYQEMLGVIWRENPCRWLKPDESPFLMATLMEWDENNQPLAGAYIDRSGLDAETWLTQLFRVVVVPLYHLLCRYGVALIAHGQNITLAMKEGVPQRVLLKDFQGDMRLVKEEFPEMDSLPQEVRDVTSRLSADYLIHDLQTGHFVTVLRFISPLMVRLGVPERRFYQLLAAVLSDYMKKHPQMSERFALFSLFRPQIIRVVLNPVKLTWPDLDGGSRMLPNYLEDLQNPLWLVTQEYES.

The protein belongs to the IucA/IucC family.

It carries out the reaction N(2)-citryl-N(6)-acetyl-N(6)-hydroxy-L-lysine + N(6)-acetyl-N(6)-hydroxy-L-lysine + ATP = aerobactin + AMP + diphosphate + H(+). Its pathway is siderophore biosynthesis; aerobactin biosynthesis. Catalyzes the attachment of the second N-acetyl-N-hydroxylysine to the carboxylic group of N-citryl-N-acetyl-N-hydroxylysine to yield aerobactin. Involved in the biosynthesis of the siderophore aerobactin which is a chelator that mediates the high-affinity iron transport systems induced under iron-stressed conditions. The sequence is that of Aerobactin synthase (iucC) from Escherichia coli.